Reading from the N-terminus, the 256-residue chain is ATP synthase peripheral stalk subunit b, mitochondrial (256 aa).

A mitochondrion-targeting transit peptide spans 1-42; sequence MLSRVVLSAAATAAPCLKNAAVLGPGVLQATRVFHTGQPRLA. Lys131 bears the N6-succinyllysine mark. Residues Lys139, Lys154, Lys162, Lys221, Lys233, and Lys244 each carry the N6-acetyllysine modification.

It belongs to the eukaryotic ATPase B chain family. In terms of assembly, component of the ATP synthase complex composed at least of ATP5F1A/subunit alpha, ATP5F1B/subunit beta, ATP5MC1/subunit c (homooctomer), MT-ATP6/subunit a, MT-ATP8/subunit 8, ATP5ME/subunit e, ATP5MF/subunit f, ATP5MG/subunit g, ATP5MK/subunit k, ATP5MJ/subunit j, ATP5F1C/subunit gamma, ATP5F1D/subunit delta, ATP5F1E/subunit epsilon, ATP5PF/subunit F6, ATP5PB/subunit b, ATP5PD/subunit d, ATP5PO/subunit OSCP. ATP synthase complex consists of a soluble F(1) head domain (subunits alpha(3) and beta(3)) - the catalytic core - and a membrane F(0) domain - the membrane proton channel (subunits c, a, 8, e, f, g, k and j). These two domains are linked by a central stalk (subunits gamma, delta, and epsilon) rotating inside the F1 region and a stationary peripheral stalk (subunits F6, b, d, and OSCP).

The protein localises to the mitochondrion. It is found in the mitochondrion inner membrane. Functionally, subunit b, of the mitochondrial membrane ATP synthase complex (F(1)F(0) ATP synthase or Complex V) that produces ATP from ADP in the presence of a proton gradient across the membrane which is generated by electron transport complexes of the respiratory chain. ATP synthase complex consist of a soluble F(1) head domain - the catalytic core - and a membrane F(1) domain - the membrane proton channel. These two domains are linked by a central stalk rotating inside the F(1) region and a stationary peripheral stalk. During catalysis, ATP synthesis in the catalytic domain of F(1) is coupled via a rotary mechanism of the central stalk subunits to proton translocation. In vivo, can only synthesize ATP although its ATP hydrolase activity can be activated artificially in vitro. Part of the complex F(0) domain. Part of the complex F(0) domain and the peripheric stalk, which acts as a stator to hold the catalytic alpha(3)beta(3) subcomplex and subunit a/ATP6 static relative to the rotary elements. The polypeptide is ATP synthase peripheral stalk subunit b, mitochondrial (Rattus norvegicus (Rat)).